The primary structure comprises 647 residues: DNA topoisomerase 4 subunit B (647 aa).

Residues tyrosine 11, asparagine 51, aspartate 78, 118-124, and lysine 344 each bind ATP; that span reads GLHGVGS. Over residues 391–401 the composition is skewed to basic and acidic residues; the sequence is AARKARDESRN. The disordered stretch occupies residues 391–421; sequence AARKARDESRNGKKNKKDKGLLSGKLTPAQS. The Toprim domain occupies 427–541; sequence NELYLVEGDS…AGHVYIALPP (115 aa). Residues glutamate 433, aspartate 506, and aspartate 508 each coordinate Mg(2+).

The protein belongs to the type II topoisomerase family. ParE type 2 subfamily. In terms of assembly, heterotetramer composed of ParC and ParE. Mg(2+) is required as a cofactor. Requires Mn(2+) as cofactor. Ca(2+) serves as cofactor.

The enzyme catalyses ATP-dependent breakage, passage and rejoining of double-stranded DNA.. With respect to regulation, inhibited by quinolones, such as levofloxacin. Its function is as follows. Topoisomerase IV is essential for chromosome segregation. It relaxes supercoiled DNA. Performs the decatenation events required during the replication of a circular DNA molecule. This chain is DNA topoisomerase 4 subunit B, found in Streptococcus pneumoniae serotype 4 (strain ATCC BAA-334 / TIGR4).